Reading from the N-terminus, the 309-residue chain is Methionyl-tRNA formyltransferase (309 aa).

109-112 lines the (6S)-5,6,7,8-tetrahydrofolate pocket; sequence SLLP.

This sequence belongs to the Fmt family.

It carries out the reaction L-methionyl-tRNA(fMet) + (6R)-10-formyltetrahydrofolate = N-formyl-L-methionyl-tRNA(fMet) + (6S)-5,6,7,8-tetrahydrofolate + H(+). Functionally, attaches a formyl group to the free amino group of methionyl-tRNA(fMet). The formyl group appears to play a dual role in the initiator identity of N-formylmethionyl-tRNA by promoting its recognition by IF2 and preventing the misappropriation of this tRNA by the elongation apparatus. This chain is Methionyl-tRNA formyltransferase, found in Clostridium perfringens (strain SM101 / Type A).